A 102-amino-acid polypeptide reads, in one-letter code: MVYAIVRAGGRQEKVSVGDFVTLNRVPGGAGSTIELPALLLVDGDKVTSAAADLAKVTVTAEILQDLRGPKIVIQKFKNKTGYKKRQGHRQELTKVKITGIK.

The protein belongs to the bacterial ribosomal protein bL21 family. As to quaternary structure, part of the 50S ribosomal subunit. Contacts protein L20.

This protein binds to 23S rRNA in the presence of protein L20. This Arthrobacter sp. (strain FB24) protein is Large ribosomal subunit protein bL21.